The chain runs to 266 residues: Undecaprenyl-diphosphatase (266 aa).

The next 8 membrane-spanning stretches (helical) occupy residues 1–21, 39–59, 87–107, 115–135, 144–164, 183–203, 218–238, and 246–266; these read MDTF…FLPI, QGLS…VMYF, WWII…KDFI, AVIA…DRMF, VGWK…IPGT, AAAR…AILV, ALSL…HLFL, and MTPF…FMFA.

This sequence belongs to the UppP family.

The protein resides in the cell inner membrane. The catalysed reaction is di-trans,octa-cis-undecaprenyl diphosphate + H2O = di-trans,octa-cis-undecaprenyl phosphate + phosphate + H(+). In terms of biological role, catalyzes the dephosphorylation of undecaprenyl diphosphate (UPP). Confers resistance to bacitracin. This Shewanella sediminis (strain HAW-EB3) protein is Undecaprenyl-diphosphatase.